The sequence spans 703 residues: Ubiquitin-like modifier-activating enzyme ATG7 (703 aa).

Ala2 carries the N-acetylalanine modification. The FAP motif signature appears at 15–17 (FAP). Lys45 participates in a covalent cross-link: Glycyl lysine isopeptide (Lys-Gly) (interchain with G-Cter in ubiquitin). Catalysis depends on Cys572, which acts as the Glycyl thioester intermediate. The residue at position 698 (Ser698) is a Phosphoserine.

This sequence belongs to the ATG7 family. As to quaternary structure, homodimer. Interacts with ATG3; this interaction is essential for the transfer of ATG8-like proteins's thioester from ATG7 to ATG3 and plays a role in the conjugation of ATG12 to ATG5. Interacts with ATG12. Forms intermediate conjugates with GABARAPL1. Forms intermediate conjugates with ATG8-like proteins such as GABARAP, GABARAPL2 or MAP1LC3A. Interacts with EP300 acetyltransferase. Interacts with FOXO1. Post-translationally, acetylated by EP300. In terms of processing, polyubiquitinated on Lys-45 via 'Lys-63'-linked ubiquitin by TRIM32; this modification positiely regulates ATG8 and ATG12 activating enzyme activity leading to initiation of autophagy under metabolic stress. In terms of tissue distribution, widely expressed, especially in kidney, liver, lymph nodes and bone marrow.

It localises to the cytoplasm. The protein resides in the preautophagosomal structure. E1-like activating enzyme involved in the 2 ubiquitin-like systems required for cytoplasm to vacuole transport (Cvt) and autophagy. Activates ATG12 for its conjugation with ATG5 as well as the ATG8 family proteins for their conjugation with phosphatidylethanolamine. Both systems are needed for the ATG8 association to Cvt vesicles and autophagosomes membranes. Required for autophagic death induced by caspase-8 inhibition. Facilitates LC3-I lipidation with phosphatidylethanolamine to form LC3-II which is found on autophagosomal membranes. Required for mitophagy which contributes to regulate mitochondrial quantity and quality by eliminating the mitochondria to a basal level to fulfill cellular energy requirements and preventing excess ROS production. Modulates p53/TP53 activity to regulate cell cycle and survival during metabolic stress. Also plays a key role in the maintenance of axonal homeostasis, the prevention of axonal degeneration, the maintenance of hematopoietic stem cells, the formation of Paneth cell granules, as well as in adipose differentiation. Plays a role in regulating the liver clock and glucose metabolism by mediating the autophagic degradation of CRY1 (clock repressor) in a time-dependent manner. This is Ubiquitin-like modifier-activating enzyme ATG7 from Homo sapiens (Human).